We begin with the raw amino-acid sequence, 611 residues long: Chaperone protein DnaK (611 aa).

Thr173 carries the phosphothreonine; by autocatalysis modification. Residues 577 to 592 (QAAAGQAEGAQGAQDA) show a composition bias toward low complexity. The tract at residues 577-611 (QAAAGQAEGAQGAQDAGTKKDNVVDAEFEEVKEDK) is disordered. The span at 600–611 (VDAEFEEVKEDK) shows a compositional bias: acidic residues.

The protein belongs to the heat shock protein 70 family.

Functionally, acts as a chaperone. This chain is Chaperone protein DnaK, found in Bacillus cereus (strain G9842).